A 150-amino-acid polypeptide reads, in one-letter code: MFDWQRFFPFQQFSKDGLKNADPKDVEQYIHHMMKSVFGPGYAVQFPFRDPLSKETSAADESDPIDIFETTSHVFVKIPLTKEQLNLLKIKHTSQTLIIENYPEKGRQEKVVLPSLVRRKGTKAIFKDGILEVMFLKNEDFNLSEIDITF.

It localises to the spore coat. Functionally, involved in spore germination. This is Spore germination protein GerT (gerT) from Bacillus licheniformis (strain ATCC 14580 / DSM 13 / JCM 2505 / CCUG 7422 / NBRC 12200 / NCIMB 9375 / NCTC 10341 / NRRL NRS-1264 / Gibson 46).